A 102-amino-acid polypeptide reads, in one-letter code: UPF0213 protein Spro_0507 (102 aa).

The GIY-YIG domain maps to 6 to 81 (PTWHLYMLRM…KQLSKTQKER (76 aa)).

Belongs to the UPF0213 family.

This is UPF0213 protein Spro_0507 from Serratia proteamaculans (strain 568).